A 329-amino-acid polypeptide reads, in one-letter code: GTPase Obg (329 aa).

The Obg domain maps to 1-159 (MQFIDEAKIF…MWVWLHLKLL (159 aa)). The 168-residue stretch at 160-327 (SDVGLVGLPN…LLANILSELQ (168 aa)) folds into the OBG-type G domain. GTP is bound by residues 166-173 (GLPNAGKS), 191-195 (FTTLT), 212-215 (DIPG), 279-282 (TKTD), and 308-310 (SSY). Mg(2+) is bound by residues S173 and T193.

The protein belongs to the TRAFAC class OBG-HflX-like GTPase superfamily. OBG GTPase family. In terms of assembly, monomer. Mg(2+) serves as cofactor.

Its subcellular location is the cytoplasm. Functionally, an essential GTPase which binds GTP, GDP and possibly (p)ppGpp with moderate affinity, with high nucleotide exchange rates and a fairly low GTP hydrolysis rate. Plays a role in control of the cell cycle, stress response, ribosome biogenesis and in those bacteria that undergo differentiation, in morphogenesis control. In Orientia tsutsugamushi (strain Ikeda) (Rickettsia tsutsugamushi), this protein is GTPase Obg.